Consider the following 330-residue polypeptide: Methionine import ATP-binding protein MetN (330 aa).

An ABC transporter domain is found at 2–241 (IAFRGVSKVY…PSTRLHQLCF (240 aa)). An ATP-binding site is contributed by 38-45 (GQSGAGKS).

It belongs to the ABC transporter superfamily. Methionine importer (TC 3.A.1.24) family. The complex is composed of two ATP-binding proteins (MetN), two transmembrane proteins (MetI) and a solute-binding protein (MetQ).

It localises to the cell inner membrane. It carries out the reaction L-methionine(out) + ATP + H2O = L-methionine(in) + ADP + phosphate + H(+). It catalyses the reaction D-methionine(out) + ATP + H2O = D-methionine(in) + ADP + phosphate + H(+). Part of the ABC transporter complex MetNIQ involved in methionine import. Responsible for energy coupling to the transport system. This is Methionine import ATP-binding protein MetN from Myxococcus xanthus (strain DK1622).